Consider the following 519-residue polypeptide: Fatty acid--[acyl-carrier-protein] ligase ScoC (519 aa).

T167 provides a ligand contact to Mg(2+). I216 and T312 together coordinate ATP. E313 is a Mg(2+) binding site. ATP-binding residues include D394 and K411.

Belongs to the ATP-dependent AMP-binding enzyme family. It depends on Mg(2+) as a cofactor.

The enzyme catalyses a medium-chain fatty acid + holo-[ACP] + ATP = a medium-chain fatty acyl-[ACP] + AMP + diphosphate. It carries out the reaction a medium-chain fatty acid + ATP + H(+) = a medium-chain fatty acyl-AMP + diphosphate. It catalyses the reaction a medium-chain fatty acyl-AMP + holo-[ACP] = a medium-chain fatty acyl-[ACP] + AMP + H(+). The catalysed reaction is octanoate + holo-[ACP] + ATP = octanoyl-[ACP] + AMP + diphosphate. The enzyme catalyses octanoate + ATP + H(+) = octanoyl-AMP + diphosphate. It carries out the reaction octanoyl-AMP + holo-[ACP] = octanoyl-[ACP] + AMP + H(+). It catalyses the reaction a (2E)-enoyl fatty acid + holo-[ACP] + ATP = a (2E)-enoyl-[ACP] + AMP + diphosphate. The catalysed reaction is a (2E)-enoyl fatty acid + ATP + H(+) = a (2E)-2-fatty-enoyl-AMP + diphosphate. The enzyme catalyses a (2E)-2-fatty-enoyl-AMP + holo-[ACP] = a (2E)-enoyl-[ACP] + AMP + H(+). It carries out the reaction (2E)-2-butenoate + holo-[ACP] + ATP = (2E)-butenoyl-[ACP] + AMP + diphosphate. It catalyses the reaction (2E)-2-butenoate + ATP + H(+) = (2E)-but-2-enoyl-AMP + diphosphate. The catalysed reaction is (2E)-but-2-enoyl-AMP + holo-[ACP] = (2E)-butenoyl-[ACP] + AMP + H(+). The enzyme catalyses a (3R)-3-isocyanyl-fatty acid + holo-[ACP] + ATP = a (3R)-3-isocyanyl-fatty acyl-[ACP] + AMP + diphosphate. It carries out the reaction a (3R)-3-isocyanyl-fatty acid + ATP + H(+) = a (3R)-3-isocyanyl-fatty acyl-AMP + diphosphate. It catalyses the reaction a (3R)-3-isocyanyl-fatty acyl-AMP + holo-[ACP] = a (3R)-3-isocyanyl-fatty acyl-[ACP] + AMP + H(+). The catalysed reaction is (3R)-3-isocyanylbutanoate + holo-[ACP] + ATP = (3R)-3-isocyanylbutanoyl-[ACP] + AMP + diphosphate. The enzyme catalyses (3R)-3-isocyanylbutanoate + ATP + H(+) = (3R)-3-isocyanylbutanoyl-AMP + diphosphate. It carries out the reaction (3R)-3-isocyanylbutanoyl-AMP + holo-[ACP] = (3R)-3-isocyanylbutanoyl-[ACP] + AMP + H(+). In terms of biological role, acyl:acyl-carrier protein ligase involved in the biosynthesis of a unique class of isonitrile lipopeptides (INLPs). Shows a strong preference for fatty acids with a short/medium-chain length (C4-C8) in vitro, and accepts alpha,beta-unsaturated fatty acids such as crotonate, which seems to be a physiological substrate. Acts twice during the INLP pathway, catalyzing the activation of crotonate ((2E)-2-butenoate) as well as (3R)-3-isocyanylbutanoate as acyl-adenylates (acyl-AMP), and then the acyl transfer to the dedicated acyl-carrier protein ScoB. This chain is Fatty acid--[acyl-carrier-protein] ligase ScoC, found in Streptomyces coeruleorubidus.